Consider the following 1029-residue polypeptide: Chitin synthase 3 (1029 aa).

Residues 1–29 (MAYYSRPASAGAARAQDDQDPYPYYPDPD) form a disordered region. Asparagine 37 carries an N-linked (GlcNAc...) asparagine glycan. The span at 46–71 (ASGAASSASHTSPFSDAHAASASPAS) shows a compositional bias: low complexity. Disordered stretches follow at residues 46–105 (ASGA…SRMP) and 168–209 (LAHR…AGTS). Over residues 76 to 91 (SHQQVSAHAPQQQHMS) the composition is skewed to polar residues. The segment covering 191–202 (AHDEKYAYDRPD) has biased composition (basic and acidic residues). 4 N-linked (GlcNAc...) asparagine glycosylation sites follow: asparagine 401, asparagine 514, asparagine 527, and asparagine 689. Transmembrane regions (helical) follow at residues 723-743 (FYSF…YIFF), 760-780 (IGVF…SSFI), 796-816 (AAVV…VLCL), 830-850 (AQMV…SLLA), 860-880 (FLQY…YAFC), 963-983 (VVLA…NGDA), and 998-1018 (VYMV…FIGS).

Belongs to the chitin synthase family. Class I subfamily.

The protein resides in the cell membrane. It is found in the cytoplasmic vesicle membrane. The catalysed reaction is [(1-&gt;4)-N-acetyl-beta-D-glucosaminyl](n) + UDP-N-acetyl-alpha-D-glucosamine = [(1-&gt;4)-N-acetyl-beta-D-glucosaminyl](n+1) + UDP + H(+). In terms of biological role, polymerizes chitin, a structural polymer of the cell wall and septum, by transferring the sugar moiety of UDP-GlcNAc to the non-reducing end of the growing chitin polymer. In Mycosarcoma maydis (Corn smut fungus), this protein is Chitin synthase 3.